Here is a 244-residue protein sequence, read N- to C-terminus: Tegument protein UL51 (244 aa).

A lipid anchor (S-palmitoyl cysteine; by host) is attached at Cys9. The tract at residues Thr175–Ala244 is disordered. Over residues Arg210–Thr220 the composition is skewed to pro residues.

Belongs to the herpesviridae UL51 family. Oligomerizes. Interacts with UL7; this interaction mediates UL7 incorporation to virions. In terms of processing, phosphorylated. Palmitoylation is necessary for Golgi localization.

The protein localises to the virion tegument. The protein resides in the host cytoplasm. Its subcellular location is the host Golgi apparatus. In terms of biological role, plays several roles during the time course of infection, including egress of virus particles from the perinuclear space and secondary envelopment of cytoplasmic capsids that bud into specific trans-Golgi network (TGN)-derived membranes. This is Tegument protein UL51 from Human herpesvirus 2 (strain HG52) (HHV-2).